The sequence spans 158 residues: Cyclic pyranopterin monophosphate synthase (158 aa).

Substrate-binding positions include 75–77 (LCH) and 113–114 (ME). Asp-128 is an active-site residue.

The protein belongs to the MoaC family. In terms of assembly, homohexamer; trimer of dimers.

The catalysed reaction is (8S)-3',8-cyclo-7,8-dihydroguanosine 5'-triphosphate = cyclic pyranopterin phosphate + diphosphate. It participates in cofactor biosynthesis; molybdopterin biosynthesis. Functionally, catalyzes the conversion of (8S)-3',8-cyclo-7,8-dihydroguanosine 5'-triphosphate to cyclic pyranopterin monophosphate (cPMP). The sequence is that of Cyclic pyranopterin monophosphate synthase from Actinobacillus pleuropneumoniae serotype 5b (strain L20).